The following is a 186-amino-acid chain: Acetyltransferase PA5475 (186 aa).

An N-acetyltransferase domain is found at 31–186 (VLIRPLREED…STQVIHRLAL (156 aa)). CoA-binding positions include 117 to 119 (VTI), Gly125, Asn156, and 161 to 163 (DLC).

Functionally, catalyzes the transfer of an acetyl group from acetyl coenzyme A (AcCoA) to an acceptor substrate and releases both CoA and the acetylated product. It prefers the antibiotic chloramphenicol. The chain is Acetyltransferase PA5475 from Pseudomonas aeruginosa (strain ATCC 15692 / DSM 22644 / CIP 104116 / JCM 14847 / LMG 12228 / 1C / PRS 101 / PAO1).